The chain runs to 317 residues: 4-hydroxy-3-methylbut-2-enyl diphosphate reductase (317 aa).

Cysteine 12 provides a ligand contact to [4Fe-4S] cluster. The (2E)-4-hydroxy-3-methylbut-2-enyl diphosphate site is built by histidine 41 and histidine 74. Dimethylallyl diphosphate contacts are provided by histidine 41 and histidine 74. Positions 41 and 74 each coordinate isopentenyl diphosphate. Cysteine 97 provides a ligand contact to [4Fe-4S] cluster. Histidine 125 contacts (2E)-4-hydroxy-3-methylbut-2-enyl diphosphate. Histidine 125 is a binding site for dimethylallyl diphosphate. Histidine 125 contributes to the isopentenyl diphosphate binding site. The Proton donor role is filled by glutamate 127. Threonine 168 is a binding site for (2E)-4-hydroxy-3-methylbut-2-enyl diphosphate. Residue cysteine 198 participates in [4Fe-4S] cluster binding. Residues serine 226, serine 227, asparagine 228, and serine 270 each coordinate (2E)-4-hydroxy-3-methylbut-2-enyl diphosphate. Dimethylallyl diphosphate contacts are provided by serine 226, serine 227, asparagine 228, and serine 270. Residues serine 226, serine 227, asparagine 228, and serine 270 each contribute to the isopentenyl diphosphate site.

It belongs to the IspH family. In terms of assembly, homodimer. It depends on [4Fe-4S] cluster as a cofactor.

It carries out the reaction isopentenyl diphosphate + 2 oxidized [2Fe-2S]-[ferredoxin] + H2O = (2E)-4-hydroxy-3-methylbut-2-enyl diphosphate + 2 reduced [2Fe-2S]-[ferredoxin] + 2 H(+). It catalyses the reaction dimethylallyl diphosphate + 2 oxidized [2Fe-2S]-[ferredoxin] + H2O = (2E)-4-hydroxy-3-methylbut-2-enyl diphosphate + 2 reduced [2Fe-2S]-[ferredoxin] + 2 H(+). The protein operates within isoprenoid biosynthesis; dimethylallyl diphosphate biosynthesis; dimethylallyl diphosphate from (2E)-4-hydroxy-3-methylbutenyl diphosphate: step 1/1. It participates in isoprenoid biosynthesis; isopentenyl diphosphate biosynthesis via DXP pathway; isopentenyl diphosphate from 1-deoxy-D-xylulose 5-phosphate: step 6/6. Functionally, catalyzes the conversion of 1-hydroxy-2-methyl-2-(E)-butenyl 4-diphosphate (HMBPP) into a mixture of isopentenyl diphosphate (IPP) and dimethylallyl diphosphate (DMAPP). Acts in the terminal step of the DOXP/MEP pathway for isoprenoid precursor biosynthesis. This Edwardsiella ictaluri (strain 93-146) protein is 4-hydroxy-3-methylbut-2-enyl diphosphate reductase.